A 368-amino-acid chain; its full sequence is MSESPKKVIVGMSGGVDSSVSAWLLQQQGYQVEGLFMKNWEEDDGEEYCTAAADLADAQAVCDKLGIELHTVNFAAEYWDNVFELFLEEYKAGRTPNPDILCNKEIKFKAFLEFAAEDLGADYIATGHYVRRADVNGKSRLLRGLDGNKDQSYFLYTLGHEQIAQSLFPVGELEKPQVRKIAEDLGLVTAKKKDSTGICFIGERKFRDFLGRYLPAQPGKIITVDGDEIGEHQGLMYHTLGQRKGLGIGGTKDGSEDPWYVVDKDVENNVLIVAQGHEHPRLMSVGLIAQQLHWVDREPFTGTLRCTVKTRYRQTDIPCTINALNDDRIEVIFDEPVAAVTPGQSAVFYSGEVCLGGGIIEQRLPLTV.

ATP-binding positions include 11 to 18 (GMSGGVDS) and Met-37. Positions 97-99 (NPD) are interaction with target base in tRNA. Cys-102 acts as the Nucleophile in catalysis. Cys-102 and Cys-199 are joined by a disulfide. Gly-127 is an ATP binding site. The tract at residues 149-151 (KDQ) is interaction with tRNA. The Cysteine persulfide intermediate role is filled by Cys-199. An interaction with tRNA region spans residues 311–312 (RY).

It belongs to the MnmA/TRMU family. As to quaternary structure, interacts with TusE.

The protein resides in the cytoplasm. It catalyses the reaction S-sulfanyl-L-cysteinyl-[protein] + uridine(34) in tRNA + AH2 + ATP = 2-thiouridine(34) in tRNA + L-cysteinyl-[protein] + A + AMP + diphosphate + H(+). Catalyzes the 2-thiolation of uridine at the wobble position (U34) of tRNA(Lys), tRNA(Glu) and tRNA(Gln), leading to the formation of s(2)U34, the first step of tRNA-mnm(5)s(2)U34 synthesis. Sulfur is provided by IscS, via a sulfur-relay system. Binds ATP and its substrate tRNAs. The chain is tRNA-specific 2-thiouridylase MnmA from Salmonella typhimurium (strain LT2 / SGSC1412 / ATCC 700720).